The sequence spans 87 residues: Small archaeal modifier protein 1 (87 aa).

1-thioglycine; alternate is present on G87. G87 is modified (glycyl adenylate; alternate). G87 participates in a covalent cross-link: Glycyl lysine isopeptide (Gly-Lys) (interchain with K-? in acceptor proteins); alternate.

The C-terminal glycine is likely acyl-adenylated (-COAMP) by UbaA, and also probably thiocarboxylated (-COSH) to function in sulfur transfer.

In terms of biological role, functions as a protein modifier covalently attached to lysine residues of substrate proteins, as well as a sulfur carrier in molybdenum cofactor (MoCo) biosynthesis. The protein modification process is termed sampylation and involves the formation of an isopeptide bond between the SAMP1 C-terminal glycine carboxylate and the epsilon-amino group of lysine residues on target proteins. May serve as a proteolytic signal in the cell to target proteins for degradation by proteasomes. This is Small archaeal modifier protein 1 (samp1) from Haloferax volcanii (strain ATCC 29605 / DSM 3757 / JCM 8879 / NBRC 14742 / NCIMB 2012 / VKM B-1768 / DS2) (Halobacterium volcanii).